The chain runs to 158 residues: Superoxide dismutase [Cu-Zn] (158 aa).

Cu cation contacts are provided by His46, His48, and His63. A disulfide bridge connects residues Cys57 and Cys149. Residues His63, His71, His80, and Asp83 each coordinate Zn(2+). A Cu cation-binding site is contributed by His120.

The protein belongs to the Cu-Zn superoxide dismutase family. As to quaternary structure, homodimer. Cu cation serves as cofactor. Requires Zn(2+) as cofactor.

The protein localises to the cytoplasm. The catalysed reaction is 2 superoxide + 2 H(+) = H2O2 + O2. Functionally, destroys radicals which are normally produced within the cells and which are toxic to biological systems. This Brugia pahangi (Filarial nematode worm) protein is Superoxide dismutase [Cu-Zn] (SODC).